A 336-amino-acid polypeptide reads, in one-letter code: Nucleoid-associated protein ECA2747 (336 aa).

The tract at residues 317-336 (KGTPPNLRDQLQRRTSGGKQ) is disordered.

Belongs to the YejK family.

It localises to the cytoplasm. The protein resides in the nucleoid. This chain is Nucleoid-associated protein ECA2747, found in Pectobacterium atrosepticum (strain SCRI 1043 / ATCC BAA-672) (Erwinia carotovora subsp. atroseptica).